A 543-amino-acid chain; its full sequence is Chaperonin GroEL 1 (543 aa).

ATP-binding positions include Thr-30–Pro-33, Lys-51, Asp-87–Thr-91, Gly-415, and Asp-496.

It belongs to the chaperonin (HSP60) family. As to quaternary structure, forms a cylinder of 14 subunits composed of two heptameric rings stacked back-to-back. Interacts with the co-chaperonin GroES.

It is found in the cytoplasm. The enzyme catalyses ATP + H2O + a folded polypeptide = ADP + phosphate + an unfolded polypeptide.. Together with its co-chaperonin GroES, plays an essential role in assisting protein folding. The GroEL-GroES system forms a nano-cage that allows encapsulation of the non-native substrate proteins and provides a physical environment optimized to promote and accelerate protein folding. In Mesorhizobium japonicum (strain LMG 29417 / CECT 9101 / MAFF 303099) (Mesorhizobium loti (strain MAFF 303099)), this protein is Chaperonin GroEL 1.